The sequence spans 104 residues: N(4)-acetylcytidine amidohydrolase (104 aa).

Residues 6–102 (TFYTRFQQDI…ELYVIAFKKV (97 aa)) form the ASCH domain. The active-site Proton acceptor is Lys-20. Residue Thr-23 is the Nucleophile of the active site. The Proton donor role is filled by Glu-73.

This sequence belongs to the N(4)-acetylcytidine amidohydrolase family.

The catalysed reaction is N(4)-acetylcytidine + H2O = cytidine + acetate + H(+). The enzyme catalyses N(4)-acetyl-2'-deoxycytidine + H2O = 2'-deoxycytidine + acetate + H(+). It carries out the reaction N(4)-acetylcytosine + H2O = cytosine + acetate + H(+). Its function is as follows. Catalyzes the hydrolysis of N(4)-acetylcytidine (ac4C). In Cronobacter sakazakii (strain ATCC BAA-894) (Enterobacter sakazakii), this protein is N(4)-acetylcytidine amidohydrolase.